Reading from the N-terminus, the 429-residue chain is Glutamate-1-semialdehyde 2,1-aminomutase 2 (429 aa).

K268 carries the post-translational modification N6-(pyridoxal phosphate)lysine.

The protein belongs to the class-III pyridoxal-phosphate-dependent aminotransferase family. HemL subfamily. In terms of assembly, homodimer. The cofactor is pyridoxal 5'-phosphate.

Its subcellular location is the cytoplasm. It carries out the reaction (S)-4-amino-5-oxopentanoate = 5-aminolevulinate. Its pathway is porphyrin-containing compound metabolism; protoporphyrin-IX biosynthesis; 5-aminolevulinate from L-glutamyl-tRNA(Glu): step 2/2. The protein is Glutamate-1-semialdehyde 2,1-aminomutase 2 of Staphylococcus aureus (strain MRSA252).